Here is a 494-residue protein sequence, read N- to C-terminus: Maintenance of mitochondrial morphology protein 1 (494 aa).

At 1 to 22 (MSSQPGDPATLPAQSSLSFTQG) the chain is on the lumenal side. A helical transmembrane segment spans residues 23–43 (FLLGQLSVVLVLAAFIKFFIF). At 44–494 (GEAPPPPSRG…GSLPEAVTPG (451 aa)) the chain is on the cytoplasmic side. Disordered stretches follow at residues 50–98 (PSRG…SSST), 274–330 (PPLD…KSNV), 398–426 (VRTGDDAETASNGPRSTVSADIGGSARHE), and 449–494 (VASR…VTPG). Over residues 54-64 (LSHRSATHRRS) the composition is skewed to basic residues. Composition is skewed to polar residues over residues 65–76 (NSIYSNSPQEAG) and 85–98 (STSNVLRPVPSSST). In terms of domain architecture, SMP-LTD spans 130–387 (QPESLDWFNV…EPRVQVVGLP (258 aa)). The span at 274–286 (PPLDTPSHSPSPP) shows a compositional bias: pro residues. Polar residues-rich tracts occupy residues 406–416 (TASNGPRSTVS) and 466–477 (RSMTRQESSGDL).

It belongs to the MMM1 family. In terms of assembly, homodimer. Component of the ER-mitochondria encounter structure (ERMES) or MDM complex, composed of mmm1, mdm10, mdm12 and mdm34. A mmm1 homodimer associates with one molecule of mdm12 on each side in a pairwise head-to-tail manner, and the SMP-LTD domains of mmm1 and mdm12 generate a continuous hydrophobic tunnel for phospholipid trafficking.

The protein localises to the endoplasmic reticulum membrane. Component of the ERMES/MDM complex, which serves as a molecular tether to connect the endoplasmic reticulum (ER) and mitochondria. Components of this complex are involved in the control of mitochondrial shape and protein biogenesis, and function in nonvesicular lipid trafficking between the ER and mitochondria. The mdm12-mmm1 subcomplex functions in the major beta-barrel assembly pathway that is responsible for biogenesis of all outer membrane beta-barrel proteins, and acts in a late step after the SAM complex. The mdm10-mdm12-mmm1 subcomplex further acts in the TOM40-specific pathway after the action of the mdm12-mmm1 complex. Essential for establishing and maintaining the structure of mitochondria and maintenance of mtDNA nucleoids. The chain is Maintenance of mitochondrial morphology protein 1 from Aspergillus clavatus (strain ATCC 1007 / CBS 513.65 / DSM 816 / NCTC 3887 / NRRL 1 / QM 1276 / 107).